The following is a 437-amino-acid chain: Repulsive guidance molecule B (437 aa).

The signal sequence occupies residues 1-45 (MGLRAAPSSAAAAAAEVEQRRSPGLCPPPLELLLLLLFSLGLLHA). A glycan (N-linked (GlcNAc...) asparagine) is linked at Asn-120. Over residues 121 to 133 (CSKDGPTSSTNPE) the composition is skewed to polar residues. The tract at residues 121–153 (CSKDGPTSSTNPEVTHDPCNYHSHAGAREHRRG) is disordered. Cystine bridges form between Cys-139/Cys-226 and Cys-163/Cys-312. The N-linked (GlcNAc...) asparagine glycan is linked to Asn-383. The GPI-anchor amidated asparagine moiety is linked to residue Asn-413. Residues 414–437 (GTPRGGSDLSVSLGLTCLILIVFL) constitute a propeptide, removed in mature form.

The protein belongs to the repulsive guidance molecule (RGM) family. In terms of assembly, homooligomer. Interacts with DRGX. Interacts with BMP2 and BMP4. Interacts with the BMP type I receptors ACVR1, BMPR1A and BMPR1B and with the BMP type II receptor ACVR2B. The functional complex with its receptor NEO1/neogenin appears to be a heterotetramer with a 2:2 stoichiometry, RGM molecules acting as staples that bring two NEO1 receptors together without interacting themselves, this arrangement leads to activation of downstream signaling via RhoA. GPI-anchored. Post-translationally, autocatalytically cleaved at low pH; the two chains remain linked via two disulfide bonds.

It is found in the cell membrane. The protein localises to the membrane raft. In terms of biological role, member of the repulsive guidance molecule (RGM) family that contributes to the patterning of the developing nervous system. Acts as a bone morphogenetic protein (BMP) coreceptor that potentiates BMP signaling. Promotes neuronal adhesion. May inhibit neurite outgrowth. This chain is Repulsive guidance molecule B, found in Homo sapiens (Human).